The primary structure comprises 598 residues: Elongation factor 4 (598 aa).

The region spanning 3–185 is the tr-type G domain; sequence QHIRNFSIIA…MIVARIPPPE (183 aa). GTP-binding positions include 15 to 20 and 132 to 135; these read DHGKST and NKID.

Belongs to the TRAFAC class translation factor GTPase superfamily. Classic translation factor GTPase family. LepA subfamily.

It localises to the cell inner membrane. The catalysed reaction is GTP + H2O = GDP + phosphate + H(+). In terms of biological role, required for accurate and efficient protein synthesis under certain stress conditions. May act as a fidelity factor of the translation reaction, by catalyzing a one-codon backward translocation of tRNAs on improperly translocated ribosomes. Back-translocation proceeds from a post-translocation (POST) complex to a pre-translocation (PRE) complex, thus giving elongation factor G a second chance to translocate the tRNAs correctly. Binds to ribosomes in a GTP-dependent manner. This Nitrosomonas eutropha (strain DSM 101675 / C91 / Nm57) protein is Elongation factor 4.